The chain runs to 208 residues: Glutathione S-transferase 1-1 (208 aa).

Positions 1–80 (MDFYYLPGSA…YLVEKYGKND (80 aa)) constitute a GST N-terminal domain. Residues Ser-9, 50–52 (HTI), and 64–66 (ESR) contribute to the glutathione site. The GST C-terminal domain maps to 86–207 (CPKKRAVINQ…EGCLEFKKFF (122 aa)).

This sequence belongs to the GST superfamily. Theta family. In terms of assembly, homodimer.

It carries out the reaction RX + glutathione = an S-substituted glutathione + a halide anion + H(+). Its function is as follows. Conjugation of reduced glutathione to a wide number of exogenous and endogenous hydrophobic electrophiles. The polypeptide is Glutathione S-transferase 1-1 (GST1) (Lucilia cuprina (Green bottle fly)).